The sequence spans 965 residues: Valine--tRNA ligase (965 aa).

The interval 1 to 22 is disordered; it reads MENTPSHINKTEPSLDKTYSPQ. The 'HIGH' region signature appears at 56-66; sequence PNVTGSLHMGH. Positions 568–572 match the 'KMSKS' region motif; it reads KMSKS. Lys-571 contacts ATP. Positions 896–965 form a coiled coil; it reads LIDKATELDR…IEQQATIAAL (70 aa).

It belongs to the class-I aminoacyl-tRNA synthetase family. ValS type 1 subfamily. In terms of assembly, monomer.

It is found in the cytoplasm. It catalyses the reaction tRNA(Val) + L-valine + ATP = L-valyl-tRNA(Val) + AMP + diphosphate. Functionally, catalyzes the attachment of valine to tRNA(Val). As ValRS can inadvertently accommodate and process structurally similar amino acids such as threonine, to avoid such errors, it has a 'posttransfer' editing activity that hydrolyzes mischarged Thr-tRNA(Val) in a tRNA-dependent manner. This chain is Valine--tRNA ligase, found in Yersinia pestis.